Reading from the N-terminus, the 283-residue chain is 5'-nucleotidase SurE 2 (283 aa).

The a divalent metal cation site is built by aspartate 19, aspartate 20, serine 52, and asparagine 110.

The protein belongs to the SurE nucleotidase family. It depends on a divalent metal cation as a cofactor.

It is found in the cytoplasm. The enzyme catalyses a ribonucleoside 5'-phosphate + H2O = a ribonucleoside + phosphate. Its function is as follows. Nucleotidase that shows phosphatase activity on nucleoside 5'-monophosphates. This is 5'-nucleotidase SurE 2 from Chlamydia caviae (strain ATCC VR-813 / DSM 19441 / 03DC25 / GPIC) (Chlamydophila caviae).